The chain runs to 313 residues: Porphobilinogen deaminase (313 aa).

S-(dipyrrolylmethanemethyl)cysteine is present on cysteine 242.

It belongs to the HMBS family. Monomer. Dipyrromethane is required as a cofactor.

The enzyme catalyses 4 porphobilinogen + H2O = hydroxymethylbilane + 4 NH4(+). It functions in the pathway porphyrin-containing compound metabolism; protoporphyrin-IX biosynthesis; coproporphyrinogen-III from 5-aminolevulinate: step 2/4. In terms of biological role, tetrapolymerization of the monopyrrole PBG into the hydroxymethylbilane pre-uroporphyrinogen in several discrete steps. This chain is Porphobilinogen deaminase, found in Escherichia coli O17:K52:H18 (strain UMN026 / ExPEC).